Reading from the N-terminus, the 280-residue chain is Intimin (280 aa).

The Big-1 domain occupies 1–92 (ITEIKADKTT…MLKLLEVEFF (92 aa)). In terms of domain architecture, BIG2 spans 127–173 (ANGGNGKYTWYSANPAIASVDPSSGQVTLKDKGETTITVVSGDKQTA). C201 and C278 form a disulfide bridge.

It belongs to the intimin/invasin family.

It is found in the cell outer membrane. Its function is as follows. An inverse autotransporter. In Hafnia alvei, this protein is Intimin (eaeA).